The sequence spans 399 residues: Elongation factor Tu (399 aa).

The region spanning 10 to 207 (KPHLNIGTIG…AVDNYVPEPQ (198 aa)) is the tr-type G domain. A G1 region spans residues 19–26 (GHIDHGKT). 19–26 (GHIDHGKT) is a binding site for GTP. Threonine 26 lines the Mg(2+) pocket. Positions 60–64 (GITIN) are G2. Residues 81 to 84 (DCPG) form a G3 region. GTP contacts are provided by residues 81-85 (DCPGH) and 136-139 (NKVD). A G4 region spans residues 136–139 (NKVD). A G5 region spans residues 174–176 (SAL).

It belongs to the TRAFAC class translation factor GTPase superfamily. Classic translation factor GTPase family. EF-Tu/EF-1A subfamily. In terms of assembly, monomer.

The protein resides in the cytoplasm. The catalysed reaction is GTP + H2O = GDP + phosphate + H(+). Functionally, GTP hydrolase that promotes the GTP-dependent binding of aminoacyl-tRNA to the A-site of ribosomes during protein biosynthesis. The chain is Elongation factor Tu from Kosmotoga olearia (strain ATCC BAA-1733 / DSM 21960 / TBF 19.5.1).